Here is a 274-residue protein sequence, read N- to C-terminus: Peroxiredoxin-4 (274 aa).

The first 40 residues, 1–40, serve as a signal peptide directing secretion; the sequence is MEAPPPPPPLPATTLAPGRSRKLLLLPLLLFLLRAEAVRG. In terms of domain architecture, Thioredoxin spans 82–240; sequence AKISKPAPYW…TLRLVQAFQY (159 aa). Residue Cys127 is the Cysteine sulfenic acid (-SOH) intermediate of the active site.

Belongs to the peroxiredoxin family. AhpC/Prx1 subfamily. In terms of assembly, homodimer; disulfide-linked, upon oxidation. 5 homodimers assemble to form a ring-like decamer. Post-translationally, the enzyme can be inactivated by further oxidation of the cysteine sulfenic acid (C(P)-SOH) to sulphinic acid (C(P)-SO2H) and sulphonic acid (C(P)-SO3H) instead of its condensation to a disulfide bond.

Its subcellular location is the cytoplasm. The protein resides in the endoplasmic reticulum. The enzyme catalyses a hydroperoxide + [thioredoxin]-dithiol = an alcohol + [thioredoxin]-disulfide + H2O. Its function is as follows. Thiol-specific peroxidase that catalyzes the reduction of hydrogen peroxide and organic hydroperoxides to water and alcohols, respectively. Plays a role in cell protection against oxidative stress by detoxifying peroxides and as sensor of hydrogen peroxide-mediated signaling events. Regulates the activation of NF-kappa-B in the cytosol by a modulation of I-kappa-B-alpha phosphorylation. This is Peroxiredoxin-4 (PRDX4) from Bos taurus (Bovine).